Consider the following 113-residue polypeptide: ATP synthase epsilon chain (113 aa).

Belongs to the ATPase epsilon chain family. F-type ATPases have 2 components, CF(1) - the catalytic core - and CF(0) - the membrane proton channel. CF(1) has five subunits: alpha(3), beta(3), gamma(1), delta(1), epsilon(1). CF(0) has three main subunits: a, b and c.

The protein localises to the cell membrane. Its function is as follows. Produces ATP from ADP in the presence of a proton gradient across the membrane. This chain is ATP synthase epsilon chain, found in Wolbachia pipientis subsp. Culex pipiens (strain wPip).